The following is a 594-amino-acid chain: Metastasis-associated protein MTA3 (594 aa).

The 147-residue stretch at 1-147 folds into the BAH domain; that stretch reads MAANMYRVGD…PSLKTLLADK (147 aa). The region spanning 148–259 is the ELM2 domain; it reads GEIRVGPRYQ…SAISVLVPLG (112 aa). Residues 266 to 318 form the SANT domain; it reads DEMEEWSASEASLFEEALEKYGKDFNDIRQDFLPWKSLTSIIEYYYMWKTTDR. A GATA-type; atypical zinc finger spans residues 379–406; that stretch reads CESCYATQSHQWYSWGPPNMQCRLCAIC. Residues Ser-428 and Ser-430 each carry the phosphoserine modification. A Phosphothreonine modification is found at Thr-455. Ser-519 bears the Phosphoserine mark.

The protein belongs to the metastasis-associated protein family. Component of the nucleosome remodeling and deacetylase (NuRD) repressor complex, composed of core proteins MTA1, MTA2, MTA3, RBBP4, RBBP7, HDAC1, HDAC2, MBD2, MBD3, and peripherally associated proteins CDK2AP1, CDK2AP2, GATAD2A, GATAD2B, CHD3, CHD4 and CHD5. The exact stoichiometry of the NuRD complex is unknown, and some subunits such as MBD2 and MBD3, GATAD2A and GATAD2B, and CHD3, CHD4 and CHD5 define mutually exclusive NuRD complexes. Interacts with BCL6. Interacts with NACC2. Interacts with PWWP2B. As to expression, expressed in germinal centers of lymphoid tissues. No expression in nonepithelial cells.

It localises to the nucleus. The protein localises to the cytoplasm. In terms of biological role, acts as a component of the histone deacetylase NuRD complex which participates in the remodeling of chromatin. Plays a role in maintenance of the normal epithelial architecture through the repression of SNAI1 transcription in a histone deacetylase-dependent manner, and thus the regulation of E-cadherin levels. Contributes to transcriptional repression by BCL6. The protein is Metastasis-associated protein MTA3 (MTA3) of Homo sapiens (Human).